The following is a 90-amino-acid chain: Large ribosomal subunit protein bL27 (90 aa).

This sequence belongs to the bacterial ribosomal protein bL27 family.

This chain is Large ribosomal subunit protein bL27, found in Paracoccus denitrificans (strain Pd 1222).